The following is a 302-amino-acid chain: 4-hydroxy-tetrahydrodipicolinate synthase (302 aa).

Residue Thr56 participates in pyruvate binding. The Proton donor/acceptor role is filled by Tyr145. Catalysis depends on Lys173, which acts as the Schiff-base intermediate with substrate. Residue Val215 participates in pyruvate binding.

This sequence belongs to the DapA family. As to quaternary structure, homotetramer; dimer of dimers.

It localises to the cytoplasm. The catalysed reaction is L-aspartate 4-semialdehyde + pyruvate = (2S,4S)-4-hydroxy-2,3,4,5-tetrahydrodipicolinate + H2O + H(+). Its pathway is amino-acid biosynthesis; L-lysine biosynthesis via DAP pathway; (S)-tetrahydrodipicolinate from L-aspartate: step 3/4. Its function is as follows. Catalyzes the condensation of (S)-aspartate-beta-semialdehyde [(S)-ASA] and pyruvate to 4-hydroxy-tetrahydrodipicolinate (HTPA). In Prochlorococcus marinus (strain MIT 9515), this protein is 4-hydroxy-tetrahydrodipicolinate synthase.